The primary structure comprises 125 residues: Multifunctional methyltransferase subunit TRM112-like protein (125 aa).

In terms of domain architecture, TRM112 spans 2–119 (KLLTHNLLSS…SRGIPNMLLS (118 aa)). A phosphoserine mark is found at Ser119 and Ser125.

It belongs to the TRM112 family. As to quaternary structure, part of the heterodimeric BUD23-TRM112 methyltransferase complex; this heterodimerization is necessary for the metabolic stability and activity of the catalytic subunit BUD23. Part of the heterodimeric N6AMT1-TRM112 methyltransferase complex; this heterodimerization is necessary for S-adenosyl-L-methionine-binding to N6AMT1/HEMK2. Part of the heterodimeric ALKBH8-TRM112 methyltransferase complex. Part of the heterodimeric METTL5-TRM112 methyltransferase complex; this heterodimerization is necessary for the stability of the catalytic subunit METTL5. Part of the heterodimeric THUMPD3-TRM112 methyltransferase complex; this complex forms an active tRNA methyltransferase, where TRMT112 acts as an activator of the catalytic subunit THUMPD3. Part of the heterodimeric THUMPD2-TRM112 methyltransferase complex; this complex forms an active tRNA methyltransferase, where TRMT112 acts as an activator of the catalytic subunit THUMPD2. Part of the heterodimeric TRMT11-TRM112 methyltransferase complex; this complex forms an active tRNA methyltransferase, where TRMT112 acts as an activator of the catalytic subunit TRMT11.

It localises to the nucleus. It is found in the nucleoplasm. The protein localises to the cytoplasm. Its subcellular location is the perinuclear region. In terms of biological role, acts as an activator of both rRNA/tRNA and protein methyltransferases. Together with methyltransferase BUD23, methylates the N(7) position of a guanine in 18S rRNA. The heterodimer with N6AMT1/HEMK2 catalyzes N5-methylation of ETF1 on 'Gln-185', using S-adenosyl L-methionine as methyl donor. The heterodimer with N6AMT1/HEMK2 also monomethylates 'Lys-12' of histone H4 (H4K12me1). The heterodimer with ALKBH8 catalyzes the methylation of 5-carboxymethyl uridine to 5-methylcarboxymethyl uridine at the wobble position of the anticodon loop in target tRNA species. Together with methyltransferase THUMPD3, catalyzes the formation of N(2)-methylguanosine at position 6 in a broad range of tRNA substrates and at position 7 of tRNA(Trp). Involved in the pre-rRNA processing steps leading to small-subunit rRNA production. Together with methyltransferase METTL5, specifically methylates the 6th position of adenine in position 1832 of 18S rRNA. This chain is Multifunctional methyltransferase subunit TRM112-like protein, found in Homo sapiens (Human).